We begin with the raw amino-acid sequence, 383 residues long: S-adenosylmethionine synthase (383 aa).

H15 contributes to the ATP binding site. D17 is a binding site for Mg(2+). E43 contributes to the K(+) binding site. L-methionine contacts are provided by E56 and Q99. The tract at residues 99–109 is flexible loop; the sequence is QSSDINQGVDR. Residues 164-166, 230-231, D239, 245-246, A262, and K266 each bind ATP; these read DAK, RF, and RK. D239 contributes to the L-methionine binding site. Position 270 (K270) interacts with L-methionine.

The protein belongs to the AdoMet synthase family. In terms of assembly, homotetramer; dimer of dimers. The cofactor is Mg(2+). It depends on K(+) as a cofactor.

It is found in the cytoplasm. It carries out the reaction L-methionine + ATP + H2O = S-adenosyl-L-methionine + phosphate + diphosphate. It functions in the pathway amino-acid biosynthesis; S-adenosyl-L-methionine biosynthesis; S-adenosyl-L-methionine from L-methionine: step 1/1. Catalyzes the formation of S-adenosylmethionine (AdoMet) from methionine and ATP. The overall synthetic reaction is composed of two sequential steps, AdoMet formation and the subsequent tripolyphosphate hydrolysis which occurs prior to release of AdoMet from the enzyme. This Mannheimia succiniciproducens (strain KCTC 0769BP / MBEL55E) protein is S-adenosylmethionine synthase.